Consider the following 480-residue polypeptide: MDKTLKLYNSITRTIDIFTPRKGNEVKMYICGPTVYDSSHIGHARTYVMFDVIRRVLSDYLKYNVRFVMNITDIDDKIIARANETGASMEEVTRKYTEEFFEDMKTLNVRSPSFVTFVTSYVDKIVKFIEKLEANGLAYESRGSVYFDLNSYQQRYSYPLFKSKDGINSEGDENKDKRSPCDFVLWKRSKENEPRYESKWGHGRPGWHIECSVMSSDILGEDLDIHAGGVDLAFPHHENEIAQCQAYFMQEPWVKCFLHTGHLNISGLKMSKSLKNFTTIKEALKTISPRQLRVLFLHHQWNKDMNYEKEHLKFAETIEKKIFNFMSVAESMRKNALAFETLENADREVLRELGNVQEAVHAALLDNVDTPAVMKRIVEMINFTNARIKTISPSTVLVVKDYIKEITDVLGLSEEERQESPGEDLIAQLLSNFRESIREMARRKEPYSKFLEKCDWIRESIKDYGYIIEDNSEGSILRKK.

Cysteine 31 is a Zn(2+) binding site. Positions 33 to 43 (PTVYDSSHIGH) match the 'HIGH' region motif. Zn(2+) is bound by residues cysteine 211, histidine 236, and glutamate 240. A 'KMSKS' region motif is present at residues 269 to 273 (KMSKS). Lysine 272 lines the ATP pocket.

It belongs to the class-I aminoacyl-tRNA synthetase family. The cofactor is Zn(2+).

The enzyme catalyses tRNA(Cys) + L-cysteine + ATP = L-cysteinyl-tRNA(Cys) + AMP + diphosphate. This is Cysteine--tRNA ligase from Encephalitozoon cuniculi (strain GB-M1) (Microsporidian parasite).